A 340-amino-acid polypeptide reads, in one-letter code: Anthranilate phosphoribosyltransferase (340 aa).

5-phospho-alpha-D-ribose 1-diphosphate contacts are provided by residues glycine 80, glycine 83–aspartate 84, threonine 88, asparagine 90–threonine 93, lysine 108–serine 116, and serine 120. Residue glycine 80 participates in anthranilate binding. Serine 92 contacts Mg(2+). Position 111 (asparagine 111) interacts with anthranilate. Residue arginine 166 participates in anthranilate binding. Aspartate 225 and glutamate 226 together coordinate Mg(2+).

This sequence belongs to the anthranilate phosphoribosyltransferase family. As to quaternary structure, homodimer. Mg(2+) is required as a cofactor.

It catalyses the reaction N-(5-phospho-beta-D-ribosyl)anthranilate + diphosphate = 5-phospho-alpha-D-ribose 1-diphosphate + anthranilate. It functions in the pathway amino-acid biosynthesis; L-tryptophan biosynthesis; L-tryptophan from chorismate: step 2/5. In terms of biological role, catalyzes the transfer of the phosphoribosyl group of 5-phosphorylribose-1-pyrophosphate (PRPP) to anthranilate to yield N-(5'-phosphoribosyl)-anthranilate (PRA). The protein is Anthranilate phosphoribosyltransferase of Roseiflexus castenholzii (strain DSM 13941 / HLO8).